A 382-amino-acid chain; its full sequence is G2/mitotic-specific cyclin-B2 (382 aa).

The span at 1-12 (MSSVEAVTQQQL) shows a compositional bias: polar residues. Residues 1 to 78 (MSSVEAVTQQ…HTSAGDPAPI (78 aa)) are disordered. Positions 38–47 (NRNAAAAANR) are enriched in low complexity.

It belongs to the cyclin family. Cyclin AB subfamily. Interacts with the CDK1 protein kinase to form a serine/threonine kinase holoenzyme complex also known as maturation promoting factor (MPF). The cyclin subunit imparts substrate specificity to the complex.

Functionally, essential for the control of the cell cycle at the G2/M (mitosis) transition. This is G2/mitotic-specific cyclin-B2 (ccnb2) from Oryzias javanicus (Javanese ricefish).